The following is a 2175-amino-acid chain: Homeobox protein cut (2175 aa).

2 disordered regions span residues 139 to 170 and 249 to 432; these read NLLANTNTPSPSPPLLSAEQQQQLQSSLQQSG and GNVK…GQPA. Low complexity-rich tracts occupy residues 153 to 169 and 249 to 268; these read LLSAEQQQQLQSSLQQS and GNVKSGSTTSNANHTNSNNS. Residues 265-343 are a coiled coil; the sequence is SNNSHQDEEE…ENKDAGEASL (79 aa). A compositionally biased stretch (acidic residues) spans 271–294; that stretch reads DEEELDDEEEDEEEDEDEDDEEEN. Residues 309-320 show a composition bias toward polar residues; sequence QQETRTEPSATT. Positions 344–359 are enriched in low complexity; that stretch reads NVSNNHNTTDSNNSCS. The span at 360–374 shows a compositional bias: polar residues; sequence RKNNNGGNESEQHVA. A compositionally biased stretch (low complexity) spans 384 to 415; the sequence is NNNTNTSNNNNTSNTATSNTNNNNNNNSSSGN. Positions 433 to 499 form a coiled coil; the sequence is VLLAAKDKEI…NEALAEATAL (67 aa). The span at 503–515 shows a compositional bias: low complexity; it reads ASTNNNNNSQSSD. Disordered stretches follow at residues 503–600 and 656–765; these read ASTN…KIKK and ASDA…NTNA. Residues 546-568 are compositionally biased toward acidic residues; that stretch reads AEDDEEDEDQAMLVDSEEAEDKP. Basic residues predominate over residues 673-696; sequence QQQHQHQQQHHQQQHLHQQHHHHL. Residues 697–710 show a composition bias toward low complexity; that stretch reads QQQPNSGSNSNPAS. The segment covering 714–735 has biased composition (basic residues); that stretch reads HHGHHLHGHGLLHPSSAHHLHH. The segment covering 738 to 765 has biased composition (low complexity); it reads TESNSNSSTPTAAGNNNGSNNSSSNTNA. Residues 877–964 constitute a DNA-binding region (CUT 1); that stretch reads NMDKYANQAL…VMLLKSLIPK (88 aa). 2 disordered regions span residues 1001–1083 and 1197–1289; these read LMKQ…HDDQ and QRSS…EFAA. Composition is skewed to basic and acidic residues over residues 1009-1030 and 1062-1083; these read QHREQERRSHGGEDSHSNEDSK and QREREREQREREQQQRLRHDDQ. A coiled-coil region spans residues 1056–1161; the sequence is EQAAAQQRER…QQQAAQAQAQ (106 aa). Over residues 1249–1282 the composition is skewed to low complexity; the sequence is GAPPTAAPPTGGASSNSAAPSPLSNSILPPALSS. A DNA-binding region (CUT 2) is located at residues 1330–1417; that stretch reads QQQFDMFNNL…VHKLVASQYK (88 aa). The stretch at 1463–1522 forms a coiled coil; it reads AQAQHLMQQMQAAAMSAAMQQQQVAQAQQQAQQAQQAQQHLQQQAQQHLQQQQHLAQQQH. Positions 1507-1540 are enriched in low complexity; sequence AQQHLQQQQHLAQQQHPHQQHHQAAAAAAALHHQ. Disordered regions lie at residues 1507–1588, 1695–1747, 1803–1826, 1922–1955, 2069–2097, and 2113–2175; these read AQQH…PMLM, ERRE…PSKK, QVPHGPAGQDNPIPSRESTSATPF, RSDDYQDDLELEGGGHNLSDNESLEGQEPEDKTT, KQEEDDDEEQSGSVNLDNEDNATSEQKLK, and SSTG…GWNY. The segment covering 1564 to 1573 has biased composition (gly residues); the sequence is AQPGGPGGNQ. A DNA-binding region (CUT 3) is located at residues 1608-1695; that stretch reads YEMAALTQDL…VERLQLLKNE (88 aa). Low complexity predominate over residues 1709-1732; it reads NQQDNSSDTSSNDTNDFYTSSPGP. The homeobox DNA-binding region spans 1745 to 1804; it reads SKKQRVLFSEEQKEALRLAFALDPYPNVGTIEFLANELGLATRTITNWFHNHRMRLKQQV. Residues Ser1940 and Ser1944 each carry the phosphoserine modification. Pro residues predominate over residues 2126–2135; it reads PLAPPPPPPA. A compositionally biased stretch (low complexity) spans 2136 to 2175; the sequence is ASSSIVSGESTTSSSSSSNTSSSTPAVTTAAATAAAGWNY.

The protein belongs to the CUT homeobox family. Detected in many cells in the central nervous system, all external sensory organs, some peripheral neurons, and in the non-neural cells of the spiracles and the Malpighian tubules.

The protein localises to the nucleus. Regulator of cell fate decisions in multiple lineages. Specifically, functions as a determination factor that specifies sensory organ identity in precursor cells. Probably also involved in cell type specification of Malpighian tubules. In absence of cut gene external sensory organs are transformed into chordotonal organs. This Drosophila melanogaster (Fruit fly) protein is Homeobox protein cut (ct).